A 252-amino-acid polypeptide reads, in one-letter code: Acetoacetate decarboxylase (252 aa).

Lys116 functions as the Schiff-base intermediate with acetoacetate in the catalytic mechanism.

This sequence belongs to the ADC family.

It catalyses the reaction acetoacetate + H(+) = acetone + CO2. In terms of biological role, catalyzes the conversion of acetoacetate to acetone and carbon dioxide. This is Acetoacetate decarboxylase from Paraburkholderia phytofirmans (strain DSM 17436 / LMG 22146 / PsJN) (Burkholderia phytofirmans).